A 309-amino-acid chain; its full sequence is Probable manganese-dependent inorganic pyrophosphatase (309 aa).

Mn(2+)-binding residues include H9, D13, D15, D75, H97, and D149.

It belongs to the PPase class C family. The cofactor is Mn(2+).

Its subcellular location is the cytoplasm. It catalyses the reaction diphosphate + H2O = 2 phosphate + H(+). The protein is Probable manganese-dependent inorganic pyrophosphatase of Bacillus cereus (strain ATCC 10987 / NRS 248).